The primary structure comprises 146 residues: Hemoglobin subunit beta-2 (146 aa).

Residues 2–146 (HWTAEEKQLV…VAHALAYHYH (145 aa)) enclose the Globin domain. Heme b contacts are provided by histidine 63 and histidine 92.

It belongs to the globin family. There are three forms of hemoglobin in Sphenodon: A, A' and D. Hb A is a tetramer of two alpha-A and two beta-1, Hb A' is a tetramer of two alpha-a and two beta-2, Hb D is a tetramer of two alpha-D and two beta-2.

Functionally, involved in oxygen transport from the lung to the various peripheral tissues. The sequence is that of Hemoglobin subunit beta-2 (HBB2) from Sphenodon punctatus (Tuatara).